The sequence spans 206 residues: MRPLTPRQAEILELIKRNIAETGMPPTRAEIATRLGFKSANAAEEHLKALAKKGCIEIMPGTSRGIRLPVEEEDNSESGLPLIGQVAAGEPILAQEHVEQYYQVDPSMFHPAADFLLRVRGDSMKNIGILEGDLLAVHKVQQARNGQVVVARVDDDVTVKRFEKKGNLVYLHAENEDYSPIKVDLSFQSLTIEGLAVGVIRNGDWL.

A DNA-binding region (H-T-H motif) is located at residues 28-48 (RAEIATRLGFKSANAAEEHLK). Catalysis depends on for autocatalytic cleavage activity residues S123 and K160.

Belongs to the peptidase S24 family. In terms of assembly, homodimer.

It carries out the reaction Hydrolysis of Ala-|-Gly bond in repressor LexA.. Represses a number of genes involved in the response to DNA damage (SOS response), including recA and lexA. In the presence of single-stranded DNA, RecA interacts with LexA causing an autocatalytic cleavage which disrupts the DNA-binding part of LexA, leading to derepression of the SOS regulon and eventually DNA repair. In Shewanella sp. (strain MR-4), this protein is LexA repressor.